The chain runs to 321 residues: CRISPR-associated endonuclease Cas1 2 (321 aa).

Glu-150, His-213, and Glu-228 together coordinate Mn(2+).

Belongs to the CRISPR-associated endonuclease Cas1 family. In terms of assembly, homodimer, forms a heterotetramer with a Cas2 homodimer. Mg(2+) is required as a cofactor. Requires Mn(2+) as cofactor.

Its function is as follows. CRISPR (clustered regularly interspaced short palindromic repeat), is an adaptive immune system that provides protection against mobile genetic elements (viruses, transposable elements and conjugative plasmids). CRISPR clusters contain spacers, sequences complementary to antecedent mobile elements, and target invading nucleic acids. CRISPR clusters are transcribed and processed into CRISPR RNA (crRNA). Acts as a dsDNA endonuclease. Involved in the integration of spacer DNA into the CRISPR cassette. The polypeptide is CRISPR-associated endonuclease Cas1 2 (Moorella thermoacetica (strain ATCC 39073 / JCM 9320)).